Here is a 332-residue protein sequence, read N- to C-terminus: Torsin-1A (332 aa).

Positions 1 to 20 are cleaved as a signal peptide; that stretch reads MKLGRAVLGLLLLAPSVVQA. The interval 91 to 251 is interaction with SNAPIN; it reads KPKKPLTLSL…VSVFNNKNSG (161 aa). 102–109 is an ATP binding site; sequence GWTGTGKN. N-linked (GlcNAc...) (high mannose) asparagine glycans are attached at residues asparagine 143 and asparagine 158. An interaction with KLC1 region spans residues 251-332; sequence GFWHSSLIDR…FTKLDYYYDD (82 aa). Residues 312–332 are interaction with SYNE3; it reads RVFSDKGCKTVFTKLDYYYDD.

It belongs to the ClpA/ClpB family. Torsin subfamily. In terms of assembly, homohexamer. Interacts with TOR1B; the interaction may be specific of neural tissues. Interacts (ATP-bound) with TOR1AIP1 and TOR1AIP2; the interactions induce ATPase activity. Interacts with KLHL14; preferentially when ATP-free. Interacts with KLC1 (via TPR repeats); the interaction associates TOR1A with the kinesin oligomeric complex. Interacts with COPS4; the interaction associates TOR1A with the CSN complex. Interacts with SNAPIN; the interaction is direct and associates SNAPIN with the CSN complex. Interacts with STON2. Interacts (ATP-bound) with SYNE3 (via KASH domain); the interaction is required for SYNE3 nuclear envelope localization. Interacts with VIM; the interaction associates TOR1A with the cytoskeleton. Interacts with PLEC. Interacts (ATP-bound) with SLC6A3; regulates SLC6A3 transport to the plasma membrane. N-glycosylated. Widely expressed. Highest levels in kidney and liver. In the brain, high levels found in the dopaminergic neurons of the substantia nigra pars compacta, as well as in the neocortex, hippocampus and cerebellum. Also highly expressed in the spinal cord.

It is found in the endoplasmic reticulum lumen. The protein localises to the nucleus membrane. Its subcellular location is the cell projection. The protein resides in the growth cone. It localises to the cytoplasmic vesicle membrane. It is found in the cytoplasmic vesicle. The protein localises to the secretory vesicle. Its subcellular location is the synaptic vesicle. The protein resides in the cytoplasm. It localises to the cytoskeleton. The enzyme catalyses ATP + H2O = ADP + phosphate + H(+). Its function is as follows. Protein with chaperone functions important for the control of protein folding, processing, stability and localization as well as for the reduction of misfolded protein aggregates. Involved in the regulation of synaptic vesicle recycling, controls STON2 protein stability in collaboration with the COP9 signalosome complex (CSN). In the nucleus, may link the cytoskeleton with the nuclear envelope, this mechanism seems to be crucial for the control of nuclear polarity, cell movement and, specifically in neurons, nuclear envelope integrity. Participates in the cellular trafficking and may regulate the subcellular location of multipass membrane proteins such as the dopamine transporter SLC6A3, leading to the modulation of dopamine neurotransmission. In the endoplasmic reticulum, plays a role in the quality control of protein folding by increasing clearance of misfolded proteins such as SGCE variants or holding them in an intermediate state for proper refolding. May have a redundant function with TOR1B in non-neural tissues. The chain is Torsin-1A (TOR1A) from Homo sapiens (Human).